The following is a 496-amino-acid chain: Iroquois-class homeodomain protein irx-4 (496 aa).

The segment at residues 141–203 (GSTRRKNATR…NARRRLKKEN (63 aa)) is a DNA-binding region (homeobox; TALE-type). The disordered stretch occupies residues 203–236 (NKMTWPPRNKCSDEKRPYDEEEEEEEEEDSQKAT). Acidic residues predominate over residues 221–231 (DEEEEEEEEED).

This sequence belongs to the TALE/IRO homeobox family. In terms of tissue distribution, expressed in the neural plate in overlapping patterns with other irx members, which all share an anterior border of expression. Broadly expressed in the tailbud rhombencephalon (hindbrain). Outside the nervous system and at tailbud stages, expressed in the developing otic vesicle, branchial arches and prospective heart region.

Its subcellular location is the nucleus. Acts partially redundantly with other irx members in neural patterning. Required for formation of the posterior forebrain, midbrain, hindbrain, and to a lesser extent, spinal cord. Patterns the neuroectoderm in both the anterior/posterior and dorsal/ventral axes. Does not appear to play a role in pronephros kidney development. This chain is Iroquois-class homeodomain protein irx-4, found in Xenopus tropicalis (Western clawed frog).